Here is a 467-residue protein sequence, read N- to C-terminus: 3-isopropylmalate dehydratase large subunit (467 aa).

Cysteine 347, cysteine 407, and cysteine 410 together coordinate [4Fe-4S] cluster.

Belongs to the aconitase/IPM isomerase family. LeuC type 1 subfamily. In terms of assembly, heterodimer of LeuC and LeuD. It depends on [4Fe-4S] cluster as a cofactor.

The catalysed reaction is (2R,3S)-3-isopropylmalate = (2S)-2-isopropylmalate. Its pathway is amino-acid biosynthesis; L-leucine biosynthesis; L-leucine from 3-methyl-2-oxobutanoate: step 2/4. Catalyzes the isomerization between 2-isopropylmalate and 3-isopropylmalate, via the formation of 2-isopropylmaleate. The chain is 3-isopropylmalate dehydratase large subunit from Nostoc sp. (strain PCC 7120 / SAG 25.82 / UTEX 2576).